Reading from the N-terminus, the 549-residue chain is Glucose-6-phosphate isomerase (549 aa).

E355 (proton donor) is an active-site residue. Active-site residues include H386 and K514.

Belongs to the GPI family.

It is found in the cytoplasm. It catalyses the reaction alpha-D-glucose 6-phosphate = beta-D-fructose 6-phosphate. Its pathway is carbohydrate biosynthesis; gluconeogenesis. The protein operates within carbohydrate degradation; glycolysis; D-glyceraldehyde 3-phosphate and glycerone phosphate from D-glucose: step 2/4. Its function is as follows. Catalyzes the reversible isomerization of glucose-6-phosphate to fructose-6-phosphate. In Enterobacter sp. (strain 638), this protein is Glucose-6-phosphate isomerase.